The following is a 194-amino-acid chain: Ion-translocating oxidoreductase complex subunit B (194 aa).

The segment at 1-26 (MSGVLIAVAALLALAAVFGAVLGFAS) is hydrophobic. The 4Fe-4S domain occupies 32–90 (EGDPIVDQIDSLLPQTQCGQCGHPGCRPYAEAIAEGEEHNRCPPGGQDTVVALSELLGR). Residues Cys-49, Cys-52, Cys-57, Cys-73, Cys-116, Cys-119, Cys-122, Cys-126, Cys-146, Cys-149, Cys-152, and Cys-156 each contribute to the [4Fe-4S] cluster site. 2 consecutive 4Fe-4S ferredoxin-type domains span residues 107–136 (KVAY…GAAK) and 137–166 (LMHT…MLEV).

Belongs to the 4Fe4S bacterial-type ferredoxin family. RnfB subfamily. As to quaternary structure, the complex is composed of six subunits: RnfA, RnfB, RnfC, RnfD, RnfE and RnfG. It depends on [4Fe-4S] cluster as a cofactor.

It is found in the cell inner membrane. Its function is as follows. Part of a membrane-bound complex that couples electron transfer with translocation of ions across the membrane. The sequence is that of Ion-translocating oxidoreductase complex subunit B from Alcanivorax borkumensis (strain ATCC 700651 / DSM 11573 / NCIMB 13689 / SK2).